The chain runs to 469 residues: Glutamate--tRNA ligase (469 aa).

A 'HIGH' region motif is present at residues 9-19 (PSPTGFLHVGG). The short motif at 236–240 (KLSKR) is the 'KMSKS' region element. ATP is bound at residue lysine 239.

Belongs to the class-I aminoacyl-tRNA synthetase family. Glutamate--tRNA ligase type 1 subfamily. Monomer.

The protein resides in the cytoplasm. It carries out the reaction tRNA(Glu) + L-glutamate + ATP = L-glutamyl-tRNA(Glu) + AMP + diphosphate. Its function is as follows. Catalyzes the attachment of glutamate to tRNA(Glu) in a two-step reaction: glutamate is first activated by ATP to form Glu-AMP and then transferred to the acceptor end of tRNA(Glu). The polypeptide is Glutamate--tRNA ligase (Shewanella frigidimarina (strain NCIMB 400)).